The sequence spans 371 residues: Mitogen-activated protein kinase homolog NTF6 (371 aa).

One can recognise a Protein kinase domain in the interval 38 to 324 (IPPIQPVGRG…VEDALNHPFL (287 aa)). ATP is bound by residues 44–52 (VGRGAYGMV) and lysine 67. Catalysis depends on aspartate 164, which acts as the Proton acceptor. Threonine 196 carries the post-translational modification Phosphothreonine. The short motif at 196 to 198 (TEY) is the TXY element. At tyrosine 198 the chain carries Phosphotyrosine.

Belongs to the protein kinase superfamily. CMGC Ser/Thr protein kinase family. MAP kinase subfamily. It depends on Mg(2+) as a cofactor. Dually phosphorylated on Thr-196 and Tyr-198, which activates the enzyme. Very low autophosphorylation, although dramatically increased when Mn(2+) is added to the reaction instead of Mg(2+).

It catalyses the reaction L-seryl-[protein] + ATP = O-phospho-L-seryl-[protein] + ADP + H(+). It carries out the reaction L-threonyl-[protein] + ATP = O-phospho-L-threonyl-[protein] + ADP + H(+). Activated by tyrosine and threonine phosphorylation. This chain is Mitogen-activated protein kinase homolog NTF6 (NTF6), found in Nicotiana tabacum (Common tobacco).